The primary structure comprises 309 residues: Ribose-phosphate pyrophosphokinase (309 aa).

ATP is bound by residues 37-39 (DGE) and 96-97 (RQ). Positions 130 and 169 each coordinate Mg(2+). K192 is an active-site residue. D-ribose 5-phosphate is bound by residues R194, D218, and 222–226 (DTAGT).

Belongs to the ribose-phosphate pyrophosphokinase family. Class I subfamily. In terms of assembly, homohexamer. The cofactor is Mg(2+).

The protein localises to the cytoplasm. It catalyses the reaction D-ribose 5-phosphate + ATP = 5-phospho-alpha-D-ribose 1-diphosphate + AMP + H(+). It participates in metabolic intermediate biosynthesis; 5-phospho-alpha-D-ribose 1-diphosphate biosynthesis; 5-phospho-alpha-D-ribose 1-diphosphate from D-ribose 5-phosphate (route I): step 1/1. Functionally, involved in the biosynthesis of the central metabolite phospho-alpha-D-ribosyl-1-pyrophosphate (PRPP) via the transfer of pyrophosphoryl group from ATP to 1-hydroxyl of ribose-5-phosphate (Rib-5-P). This Wolinella succinogenes (strain ATCC 29543 / DSM 1740 / CCUG 13145 / JCM 31913 / LMG 7466 / NCTC 11488 / FDC 602W) (Vibrio succinogenes) protein is Ribose-phosphate pyrophosphokinase.